Here is a 401-residue protein sequence, read N- to C-terminus: Argininosuccinate synthase (401 aa).

9 to 17 is a binding site for ATP; sequence AYSGGLDTS. Tyr86 is a binding site for L-citrulline. Gly116 contributes to the ATP binding site. L-aspartate is bound by residues Thr118, Asn122, and Asp123. Asn122 is an L-citrulline binding site. Arg126, Ser174, Ser183, Glu259, and Tyr271 together coordinate L-citrulline.

Belongs to the argininosuccinate synthase family. Type 1 subfamily. Homotetramer.

Its subcellular location is the cytoplasm. It carries out the reaction L-citrulline + L-aspartate + ATP = 2-(N(omega)-L-arginino)succinate + AMP + diphosphate + H(+). The protein operates within amino-acid biosynthesis; L-arginine biosynthesis; L-arginine from L-ornithine and carbamoyl phosphate: step 2/3. In Bacillus cereus (strain AH187), this protein is Argininosuccinate synthase.